The sequence spans 287 residues: MSHQETWHETLHDHFGQYFTVDNLLYRDTTGQQDLVIFENAALGRVMALDGVVQTTERDEFIYHEMMAHVPLIAHGGAKKVLIIGGGDGGMLREVSRHPGVEQITMVEIDAGVVTFCKQYLPRHNAGAFDDPRFKLVIADGVNFVSQSSEKFDVIISDCTDPIGPGESLFTSNFYQDCARCLNEGGIFVAQNGVCFLQQDEVVNSHRKLGHYFSDISFYQAAVPTYYGGIMTFAWASQNPALRQLDTATLAARIDETALTCRYYNAAIHHGSFALPQYLLNALSASR.

The PABS domain occupies 5–238 (ETWHETLHDH…GIMTFAWASQ (234 aa)). Residue Gln-33 coordinates S-methyl-5'-thioadenosine. Residues His-64 and Asp-88 each coordinate spermidine. Residues Glu-108 and 140–141 (DG) each bind S-methyl-5'-thioadenosine. The Proton acceptor role is filled by Asp-158. Residue 158–161 (DCTD) participates in spermidine binding. Position 165 (Pro-165) interacts with S-methyl-5'-thioadenosine.

The protein belongs to the spermidine/spermine synthase family. Homodimer or homotetramer.

It is found in the cytoplasm. The enzyme catalyses S-adenosyl 3-(methylsulfanyl)propylamine + putrescine = S-methyl-5'-thioadenosine + spermidine + H(+). It participates in amine and polyamine biosynthesis; spermidine biosynthesis; spermidine from putrescine: step 1/1. Catalyzes the irreversible transfer of a propylamine group from the amino donor S-adenosylmethioninamine (decarboxy-AdoMet) to putrescine (1,4-diaminobutane) to yield spermidine. This chain is Polyamine aminopropyltransferase, found in Sodalis glossinidius (strain morsitans).